The chain runs to 327 residues: dTDP-4-dehydrorhamnose reductase (327 aa).

A disordered region spans residues methionine 1–asparagine 22. Residues glycine 43–valine 45, aspartate 69–isoleucine 70, and alanine 91–threonine 93 each bind NADH. NADPH-binding positions include methionine 44 to valine 45, aspartate 69 to isoleucine 70, and alanine 91 to threonine 93. A dTDP-beta-L-rhamnose-binding site is contributed by threonine 132 to aspartate 133. Residues tyrosine 157 and lysine 161 each coordinate NADH. The NADPH site is built by tyrosine 157 and lysine 161. Tyrosine 157 functions as the Proton donor/acceptor in the catalytic mechanism. Tryptophan 182 is a dTDP-beta-L-rhamnose binding site. Positions proline 264 to proline 276 are enriched in basic and acidic residues. The segment at proline 264 to serine 292 is disordered.

Belongs to the dTDP-4-dehydrorhamnose reductase family. The cofactor is Mg(2+).

It catalyses the reaction dTDP-beta-L-rhamnose + NADP(+) = dTDP-4-dehydro-beta-L-rhamnose + NADPH + H(+). It participates in carbohydrate biosynthesis; dTDP-L-rhamnose biosynthesis. In terms of biological role, involved in the biosynthesis of the dTDP-L-rhamnose which is a component of the critical linker, D-N-acetylglucosamine-L-rhamnose disaccharide, which connects the galactan region of arabinogalactan to peptidoglycan via a phosphodiester linkage. Catalyzes the reduction of dTDP-6-deoxy-L-lyxo-4-hexulose to yield dTDP-L-rhamnose. This is dTDP-4-dehydrorhamnose reductase from Mycolicibacterium smegmatis (strain ATCC 700084 / mc(2)155) (Mycobacterium smegmatis).